A 273-amino-acid polypeptide reads, in one-letter code: Anthranilate synthase beta subunit 2, chloroplastic (273 aa).

The transit peptide at 1-36 (MAATTLYNSCLLQPKYGFTTRRLNQSLVNSLTNPTR) directs the protein to the chloroplast. The Glutamine amidotransferase type-1 domain occupies 71–270 (PIIVIDNYDS…IKLVEKKESE (200 aa)). Catalysis depends on cysteine 149, which acts as the Nucleophile. Residues histidine 244 and glutamate 246 contribute to the active site.

In terms of assembly, heterotetramer consisting of two non-identical subunits: a beta subunit and a large alpha subunit.

It is found in the plastid. The protein localises to the chloroplast. The catalysed reaction is chorismate + L-glutamine = anthranilate + pyruvate + L-glutamate + H(+). It functions in the pathway amino-acid biosynthesis; L-tryptophan biosynthesis; L-tryptophan from chorismate: step 1/5. Feedback inhibition by tryptophan. Its function is as follows. Part of a heterotetrameric complex that catalyzes the two-step biosynthesis of anthranilate, an intermediate in the biosynthesis of L-tryptophan. In the first step, the glutamine-binding beta subunit of anthranilate synthase (AS) provides the glutamine amidotransferase activity which generates ammonia as a substrate that, along with chorismate, is used in the second step, catalyzed by the large alpha subunit of AS to produce anthranilate. The polypeptide is Anthranilate synthase beta subunit 2, chloroplastic (ASB2) (Arabidopsis thaliana (Mouse-ear cress)).